The primary structure comprises 242 residues: uncharacterized protein (242 aa).

In terms of domain architecture, Response regulatory spans 3-116; it reads TALVIDDEPF…RLRKTVKRLS (114 aa). D54 is modified (4-aspartylphosphate). In terms of domain architecture, HTH LytTR-type spans 139–240; sequence IPCIGHNRIV…LKLLKEMLGL (102 aa).

This is an uncharacterized protein from Vibrio vulnificus (strain CMCP6).